Here is a 226-residue protein sequence, read N- to C-terminus: Prolactin (226 aa).

A signal peptide spans 1–29 (MNSQGSAQKAGTLLLLLISNLLFCQNVQP). Cys33 and Cys38 form a disulfide bridge. Residues Ser53 and Ser117 each carry the phosphoserine modification. Intrachain disulfides connect Cys85-Cys201 and Cys218-Cys226.

The protein belongs to the somatotropin/prolactin family. As to quaternary structure, interacts with PRLR.

The protein localises to the secreted. In terms of biological role, prolactin acts primarily on the mammary gland by promoting lactation. This Mus musculus (Mouse) protein is Prolactin (Prl).